The sequence spans 350 residues: MRILVTGGAGFIGSALVRYLVSINAEVLNVDKLTYAGNLASLKPVEGLRNYRFLRADICDRVAINEAFETFQPDYVIHLAAESHVDRSITGADDFVQTNVNGTFTMLETARQYWSNLSQNRKAFFKMLHVSTDEVYGSLGDRGQFEEVSPYDPSSPYSASKAASDHFATAWQRTYGLPVVISNCSNNYGPFHFPEKLIPLMILNALDRKPLPVYGTGSNIRDWLYVDDHARALWLIVREGRPGEKYNVGGRNELRNIDVVNRICLLLDELSPNASHYGDLITFVKDRPGHDARYAIDATKLETELGWKAQENFDTGIRKTVEWYLENGWWWQPLRDKVYSGERLGLLEKA.

7–13 (GGAGFIG) lines the NAD(+) pocket. Residue threonine 132 participates in substrate binding. Residue aspartate 133 is the Proton donor of the active site. Catalysis depends on proton acceptor residues glutamate 134 and tyrosine 157.

It belongs to the NAD(P)-dependent epimerase/dehydratase family. dTDP-glucose dehydratase subfamily. NAD(+) is required as a cofactor.

It catalyses the reaction dTDP-alpha-D-glucose = dTDP-4-dehydro-6-deoxy-alpha-D-glucose + H2O. The protein operates within carbohydrate biosynthesis; dTDP-L-rhamnose biosynthesis. This is Probable dTDP-glucose 4,6-dehydratase from Sinorhizobium fredii (strain NBRC 101917 / NGR234).